Consider the following 299-residue polypeptide: Dermonecrotic toxin LiSicTox-alphaIVA1 (299 aa).

Positions 1–18 (MLFPTALIFGCWALVIEG) are cleaved as a signal peptide. Residue His-30 is part of the active site. Positions 50 and 52 each coordinate Mg(2+). His-66 functions as the Nucleophile in the catalytic mechanism. Intrachain disulfides connect Cys-70-Cys-76 and Cys-72-Cys-217. Residue Asp-110 coordinates Mg(2+).

It belongs to the arthropod phospholipase D family. Class II subfamily. Class IIa sub-subfamily. The cofactor is Mg(2+). Expressed by the venom gland.

It localises to the secreted. The catalysed reaction is an N-(acyl)-sphingosylphosphocholine = an N-(acyl)-sphingosyl-1,3-cyclic phosphate + choline. The enzyme catalyses an N-(acyl)-sphingosylphosphoethanolamine = an N-(acyl)-sphingosyl-1,3-cyclic phosphate + ethanolamine. It carries out the reaction a 1-acyl-sn-glycero-3-phosphocholine = a 1-acyl-sn-glycero-2,3-cyclic phosphate + choline. It catalyses the reaction a 1-acyl-sn-glycero-3-phosphoethanolamine = a 1-acyl-sn-glycero-2,3-cyclic phosphate + ethanolamine. In terms of biological role, dermonecrotic toxins cleave the phosphodiester linkage between the phosphate and headgroup of certain phospholipids (sphingolipid and lysolipid substrates), forming an alcohol (often choline) and a cyclic phosphate. This toxin acts on sphingomyelin (SM) with high activity. It may also act on ceramide phosphoethanolamine (CPE), lysophosphatidylcholine (LPC) and lysophosphatidylethanolamine (LPE), but not on lysophosphatidylserine (LPS), and lysophosphatidylglycerol (LPG). It acts by transphosphatidylation, releasing exclusively cyclic phosphate products as second products. Has hemolytic activity in human erythrocytes in a dose-dependent manner. In vivo, this toxin induces dermonecrosis, edema, hemorrhage, massive inflammatory response, as well as vascular permeability. In addition, thrombus formation has also been detected in dermal blood vessels. It also induces platelet aggregation. It is noteworthy that a Glu-248 replaces the Asp present in paralogs, without decrease in catalytic and hemolytic activities. In Loxosceles intermedia (Brown spider), this protein is Dermonecrotic toxin LiSicTox-alphaIVA1.